A 343-amino-acid chain; its full sequence is Undecaprenyl-diphosphatase 2 (343 aa).

4 consecutive transmembrane segments (helical) span residues 21 to 41, 57 to 77, 104 to 124, and 129 to 149; these read LFPV…GGSW, PYLT…LVFF, LAWL…ALEH, and LFAK…ILLA. Low complexity predominate over residues 179–193; sequence VPAPATVPTQTTSAP. A disordered region spans residues 179–202; sequence VPAPATVPTQTTSAPGGRATARHT. 4 helical membrane passes run 225–245, 265–285, 294–314, and 322–342; these read AGVI…RSGI, FLLA…ALAG, QVIL…RFLV, and LTPF…RFAI.

This sequence belongs to the UppP family.

It localises to the cell membrane. It catalyses the reaction di-trans,octa-cis-undecaprenyl diphosphate + H2O = di-trans,octa-cis-undecaprenyl phosphate + phosphate + H(+). Functionally, catalyzes the dephosphorylation of undecaprenyl diphosphate (UPP). Confers resistance to bacitracin. The chain is Undecaprenyl-diphosphatase 2 from Frankia alni (strain DSM 45986 / CECT 9034 / ACN14a).